We begin with the raw amino-acid sequence, 291 residues long: Bifunctional protein FolD (291 aa).

NADP(+)-binding positions include 166–168 (GAS) and Ile232.

This sequence belongs to the tetrahydrofolate dehydrogenase/cyclohydrolase family. As to quaternary structure, homodimer.

It catalyses the reaction (6R)-5,10-methylene-5,6,7,8-tetrahydrofolate + NADP(+) = (6R)-5,10-methenyltetrahydrofolate + NADPH. The catalysed reaction is (6R)-5,10-methenyltetrahydrofolate + H2O = (6R)-10-formyltetrahydrofolate + H(+). Its pathway is one-carbon metabolism; tetrahydrofolate interconversion. Catalyzes the oxidation of 5,10-methylenetetrahydrofolate to 5,10-methenyltetrahydrofolate and then the hydrolysis of 5,10-methenyltetrahydrofolate to 10-formyltetrahydrofolate. The polypeptide is Bifunctional protein FolD (Photorhabdus laumondii subsp. laumondii (strain DSM 15139 / CIP 105565 / TT01) (Photorhabdus luminescens subsp. laumondii)).